The chain runs to 503 residues: MVSIRPDEISSIIRQQIESYDQTVTVSNVGTVLQVGDGTARIYGLEQAMAGELLEFEDGTVGIALNLEEDNVGAVLMGTGLDIQEGSTVKATGKIAQVPVGEALIGRVVDALGRPIDGKGDINTTETRLIESMAPGIVARKSVCEPMQTGITAIDAMIPVGRGQRELIIGDRKTGKTAIAIDTIINQKSEDVICVYVAIGQKASTVAQVIGTLEEKGAMAYTIVVAANANDPATLQYLAPYTGASMAEYFMYKGKATLVIYDDLSKQAQAYRQLSLLLKRPPGREAYPGDVFYIHSRLLERAAKLSDALGGGSMTALPVIETQAGDVSAYIPTNVISITDGQIFLSSDLFNSGFRPAINAGISVSRVGSAAQTKAMKQVAGKLKLELAQFAELEAFSQFASDLDAATQSQLARGQRLREVLKQPENSPLAVWEQVAIAYAGLNGYLDEIPVPKVSEFAAGLRDYIKTSKAKFADIVGSEKKLTDEAETLLKEAIAEYKQAFGV.

170-177 serves as a coordination point for ATP; it reads GDRKTGKT.

Belongs to the ATPase alpha/beta chains family. F-type ATPases have 2 components, CF(1) - the catalytic core - and CF(0) - the membrane proton channel. CF(1) has five subunits: alpha(3), beta(3), gamma(1), delta(1), epsilon(1). CF(0) has four main subunits: a, b, b' and c.

It localises to the cellular thylakoid membrane. The enzyme catalyses ATP + H2O + 4 H(+)(in) = ADP + phosphate + 5 H(+)(out). Produces ATP from ADP in the presence of a proton gradient across the membrane. The alpha chain is a regulatory subunit. The sequence is that of ATP synthase subunit alpha from Rippkaea orientalis (strain PCC 8801 / RF-1) (Cyanothece sp. (strain PCC 8801)).